The chain runs to 125 residues: UPF0102 protein PBPRA3228 (125 aa).

This sequence belongs to the UPF0102 family.

This is UPF0102 protein PBPRA3228 from Photobacterium profundum (strain SS9).